We begin with the raw amino-acid sequence, 216 residues long: MOB kinase activator 1B (216 aa).

N-acetylserine is present on Ser-2. A phosphothreonine; by STK4/MST1 mark is found at Thr-12 and Thr-35. Residues Cys-79, Cys-84, His-161, and His-166 each coordinate Zn(2+).

The protein belongs to the MOB1/phocein family. As to quaternary structure, binds STK38L. Interacts with LATS1 and LATS2. In terms of processing, phosphorylated by STK3/MST2 and STK4/MST1 and this phosphorylation enhances its binding to LATS1. Adrenal gland, bone marrow, brain, lung, placenta, prostate, salivary gland, skeletal muscle, testis, thymus, thyroid gland, uterus, colon with mucosa, fetal brain and fetal liver.

It is found in the cytoplasm. The protein localises to the nucleus. Functionally, activator of LATS1/2 in the Hippo signaling pathway which plays a pivotal role in organ size control and tumor suppression by restricting proliferation and promoting apoptosis. The core of this pathway is composed of a kinase cascade wherein STK3/MST2 and STK4/MST1, in complex with its regulatory protein SAV1, phosphorylates and activates LATS1/2 in complex with its regulatory protein MOB1, which in turn phosphorylates and inactivates YAP1 oncoprotein and WWTR1/TAZ. Phosphorylation of YAP1 by LATS1/2 inhibits its translocation into the nucleus to regulate cellular genes important for cell proliferation, cell death, and cell migration. Stimulates the kinase activity of STK38L. The sequence is that of MOB kinase activator 1B from Homo sapiens (Human).